Reading from the N-terminus, the 372-residue chain is Fatty acid 2-hydroxylase (372 aa).

The Cytochrome b5 heme-binding domain occupies 8–86 (AASFTSAEVQ…LEQYYVGELR (79 aa)). Heme contacts are provided by histidine 43 and histidine 69. A run of 2 helical transmembrane segments spans residues 168-188 (VWYSVPIIWVPLVLYLSWSYY) and 213-233 (SVFIGLFVLGMLIWTLVEYLI). A Fatty acid hydroxylase domain is found at 219–361 (FVLGMLIWTL…TKLWDYFFHT (143 aa)). Histidine 234, histidine 239, histidine 257, histidine 260, and histidine 261 together coordinate Zn(2+). Transmembrane regions (helical) follow at residues 268–288 (SRLVFPPVPASVVVAFFYVFL) and 290–310 (LILPEAVAGILFAGGLLGYVL). Residues histidine 315, histidine 319, histidine 336, histidine 339, and histidine 340 each coordinate Zn(2+).

It belongs to the sterol desaturase family. SCS7 subfamily. Requires Zn(2+) as cofactor. In terms of tissue distribution, detected in oligodendrocytes (at protein level). Detected in sciatic nerve.

It is found in the endoplasmic reticulum membrane. Its subcellular location is the microsome membrane. It catalyses the reaction a 1,2-saturated fatty acid + 2 Fe(II)-[cytochrome b5] + O2 + 2 H(+) = a (R)-2-hydroxy fatty acid + 2 Fe(III)-[cytochrome b5] + H2O. The enzyme catalyses hexadecanoate + 2 Fe(II)-[cytochrome b5] + O2 + 2 H(+) = (R)-2-hydroxyhexadecanoate + 2 Fe(III)-[cytochrome b5] + H2O. The catalysed reaction is octadecanoate + 2 Fe(II)-[cytochrome b5] + O2 + 2 H(+) = (R)-2-hydroxyoctadecanoate + 2 Fe(III)-[cytochrome b5] + H2O. It carries out the reaction docosanoate + 2 Fe(II)-[cytochrome b5] + O2 + 2 H(+) = 2-hydroxydocosanoate + 2 Fe(III)-[cytochrome b5] + H2O. It catalyses the reaction tetracosanoate + 2 Fe(II)-[cytochrome b5] + O2 + 2 H(+) = (R)-2-hydroxytetracosanoate + 2 Fe(III)-[cytochrome b5] + H2O. It participates in lipid metabolism; fatty acid metabolism. Its pathway is sphingolipid metabolism; galactosylceramide biosynthesis. Functionally, catalyzes the hydroxylation of free fatty acids at the C-2 position to produce 2-hydroxy fatty acids, which are building blocks of sphingolipids and glycosphingolipids common in neural tissue and epidermis. FA2H is stereospecific for the production of (R)-2-hydroxy fatty acids. Plays an essential role in the synthesis of galactosphingolipids of the myelin sheath. Responsible for the synthesis of sphingolipids and glycosphingolipids involved in the formation of epidermal lamellar bodies critical for skin permeability barrier. Participates in the synthesis of glycosphingolipids and a fraction of type II wax diesters in sebaceous gland, specifically regulating hair follicle homeostasis. Involved in the synthesis of sphingolipids of plasma membrane rafts, controlling lipid raft mobility and trafficking of raft-associated proteins. The polypeptide is Fatty acid 2-hydroxylase (Rattus norvegicus (Rat)).